We begin with the raw amino-acid sequence, 79 residues long: Small ribosomal subunit protein bS18 (79 aa).

It belongs to the bacterial ribosomal protein bS18 family. Part of the 30S ribosomal subunit. Forms a tight heterodimer with protein bS6.

Binds as a heterodimer with protein bS6 to the central domain of the 16S rRNA, where it helps stabilize the platform of the 30S subunit. The sequence is that of Small ribosomal subunit protein bS18 from Listeria innocua serovar 6a (strain ATCC BAA-680 / CLIP 11262).